A 249-amino-acid polypeptide reads, in one-letter code: Segregation and condensation protein A (249 aa).

This sequence belongs to the ScpA family. As to quaternary structure, component of a cohesin-like complex composed of ScpA, ScpB and the Smc homodimer, in which ScpA and ScpB bind to the head domain of Smc. The presence of the three proteins is required for the association of the complex with DNA.

The protein resides in the cytoplasm. In terms of biological role, participates in chromosomal partition during cell division. May act via the formation of a condensin-like complex containing Smc and ScpB that pull DNA away from mid-cell into both cell halves. The polypeptide is Segregation and condensation protein A (Clostridium acetobutylicum (strain ATCC 824 / DSM 792 / JCM 1419 / IAM 19013 / LMG 5710 / NBRC 13948 / NRRL B-527 / VKM B-1787 / 2291 / W)).